The sequence spans 287 residues: Small ribosomal subunit biogenesis GTPase RsgA (287 aa).

The CP-type G domain occupies 61–218 (SSELIRPTVA…LVDTPGFTTL (158 aa)). GTP-binding positions include 110 to 113 (NKED) and 161 to 169 (GPSGAGKST). The Zn(2+) site is built by Cys242, Cys247, His249, and Cys255.

Belongs to the TRAFAC class YlqF/YawG GTPase family. RsgA subfamily. As to quaternary structure, monomer. Associates with 30S ribosomal subunit, binds 16S rRNA. The cofactor is Zn(2+).

Its subcellular location is the cytoplasm. In terms of biological role, one of several proteins that assist in the late maturation steps of the functional core of the 30S ribosomal subunit. Helps release RbfA from mature subunits. May play a role in the assembly of ribosomal proteins into the subunit. Circularly permuted GTPase that catalyzes slow GTP hydrolysis, GTPase activity is stimulated by the 30S ribosomal subunit. The sequence is that of Small ribosomal subunit biogenesis GTPase RsgA from Clostridium perfringens (strain ATCC 13124 / DSM 756 / JCM 1290 / NCIMB 6125 / NCTC 8237 / Type A).